Consider the following 392-residue polypeptide: Methylthioribose-1-phosphate isomerase (392 aa).

Asp268 functions as the Proton donor in the catalytic mechanism.

Belongs to the eIF-2B alpha/beta/delta subunits family. MtnA subfamily.

It localises to the cytoplasm. Its subcellular location is the nucleus. The enzyme catalyses 5-(methylsulfanyl)-alpha-D-ribose 1-phosphate = 5-(methylsulfanyl)-D-ribulose 1-phosphate. Its pathway is amino-acid biosynthesis; L-methionine biosynthesis via salvage pathway; L-methionine from S-methyl-5-thio-alpha-D-ribose 1-phosphate: step 1/6. In terms of biological role, catalyzes the interconversion of methylthioribose-1-phosphate (MTR-1-P) into methylthioribulose-1-phosphate (MTRu-1-P). The polypeptide is Methylthioribose-1-phosphate isomerase (Ajellomyces capsulatus (strain G186AR / H82 / ATCC MYA-2454 / RMSCC 2432) (Darling's disease fungus)).